A 262-amino-acid chain; its full sequence is Beta-phosphoglucomutase (262 aa).

Residue aspartate 29 is the Nucleophile of the active site. The Mg(2+) site is built by aspartate 29 and aspartate 31. Residue aspartate 29 is modified to 4-aspartylphosphate. The active-site Proton donor/acceptor is the aspartate 31. Aspartate 31, glycine 79, arginine 82, serine 157, and asparagine 159 together coordinate beta-D-glucose 6-phosphate. Aspartate 215 contacts Mg(2+).

This sequence belongs to the HAD-like hydrolase superfamily. CbbY/CbbZ/Gph/YieH family. Monomer. Requires Mg(2+) as cofactor. In terms of processing, autophosphorylated.

It carries out the reaction beta-D-glucose 1-phosphate = beta-D-glucose 6-phosphate. In terms of biological role, catalyzes the interconversion of D-glucose 1-phosphate (G1P) and D-glucose 6-phosphate (G6P), forming beta-D-glucose 1,6-(bis)phosphate (beta-G16P) as an intermediate. The chain is Beta-phosphoglucomutase from Mycobacterium bovis (strain ATCC BAA-935 / AF2122/97).